The primary structure comprises 220 residues: Ribosomal RNA large subunit methyltransferase E (220 aa).

S-adenosyl-L-methionine is bound by residues glycine 60, tryptophan 62, aspartate 92, aspartate 108, and aspartate 133. The Proton acceptor role is filled by lysine 173. The tract at residues 198–220 is disordered; that stretch reads KPKASRDKSSETFILGRQLKHPR.

This sequence belongs to the class I-like SAM-binding methyltransferase superfamily. RNA methyltransferase RlmE family.

It localises to the cytoplasm. The enzyme catalyses uridine(2552) in 23S rRNA + S-adenosyl-L-methionine = 2'-O-methyluridine(2552) in 23S rRNA + S-adenosyl-L-homocysteine + H(+). In terms of biological role, specifically methylates the uridine in position 2552 of 23S rRNA at the 2'-O position of the ribose in the fully assembled 50S ribosomal subunit. The protein is Ribosomal RNA large subunit methyltransferase E of Burkholderia cenocepacia (strain HI2424).